The chain runs to 245 residues: Probable transcriptional regulatory protein TP_0474 (245 aa).

The protein belongs to the TACO1 family.

It is found in the cytoplasm. The chain is Probable transcriptional regulatory protein TP_0474 from Treponema pallidum (strain Nichols).